The chain runs to 165 residues: uncharacterized protein (165 aa).

This is an uncharacterized protein from Invertebrate iridescent virus 6 (IIV-6).